A 137-amino-acid chain; its full sequence is Phosphoribosyl-AMP cyclohydrolase (137 aa).

Asp-84 serves as a coordination point for Mg(2+). Cys-85 contacts Zn(2+). The Mg(2+) site is built by Asp-86 and Asp-88. Zn(2+)-binding residues include Cys-101 and Cys-108.

This sequence belongs to the PRA-CH family. In terms of assembly, homodimer. The cofactor is Mg(2+). Zn(2+) is required as a cofactor.

The protein localises to the cytoplasm. The enzyme catalyses 1-(5-phospho-beta-D-ribosyl)-5'-AMP + H2O = 1-(5-phospho-beta-D-ribosyl)-5-[(5-phospho-beta-D-ribosylamino)methylideneamino]imidazole-4-carboxamide. It functions in the pathway amino-acid biosynthesis; L-histidine biosynthesis; L-histidine from 5-phospho-alpha-D-ribose 1-diphosphate: step 3/9. In terms of biological role, catalyzes the hydrolysis of the adenine ring of phosphoribosyl-AMP. The sequence is that of Phosphoribosyl-AMP cyclohydrolase from Chlorobium chlorochromatii (strain CaD3).